A 211-amino-acid chain; its full sequence is Thiamine-phosphate synthase (211 aa).

4-amino-2-methyl-5-(diphosphooxymethyl)pyrimidine contacts are provided by residues 37–41 (QLRIK) and asparagine 69. Aspartate 70 and aspartate 89 together coordinate Mg(2+). Serine 108 lines the 4-amino-2-methyl-5-(diphosphooxymethyl)pyrimidine pocket. 134–136 (TQT) lines the 2-[(2R,5Z)-2-carboxy-4-methylthiazol-5(2H)-ylidene]ethyl phosphate pocket. Lysine 137 lines the 4-amino-2-methyl-5-(diphosphooxymethyl)pyrimidine pocket. Residues glycine 166 and 186–187 (VS) contribute to the 2-[(2R,5Z)-2-carboxy-4-methylthiazol-5(2H)-ylidene]ethyl phosphate site.

It belongs to the thiamine-phosphate synthase family. The cofactor is Mg(2+).

The catalysed reaction is 2-[(2R,5Z)-2-carboxy-4-methylthiazol-5(2H)-ylidene]ethyl phosphate + 4-amino-2-methyl-5-(diphosphooxymethyl)pyrimidine + 2 H(+) = thiamine phosphate + CO2 + diphosphate. It catalyses the reaction 2-(2-carboxy-4-methylthiazol-5-yl)ethyl phosphate + 4-amino-2-methyl-5-(diphosphooxymethyl)pyrimidine + 2 H(+) = thiamine phosphate + CO2 + diphosphate. The enzyme catalyses 4-methyl-5-(2-phosphooxyethyl)-thiazole + 4-amino-2-methyl-5-(diphosphooxymethyl)pyrimidine + H(+) = thiamine phosphate + diphosphate. The protein operates within cofactor biosynthesis; thiamine diphosphate biosynthesis; thiamine phosphate from 4-amino-2-methyl-5-diphosphomethylpyrimidine and 4-methyl-5-(2-phosphoethyl)-thiazole: step 1/1. Functionally, condenses 4-methyl-5-(beta-hydroxyethyl)thiazole monophosphate (THZ-P) and 2-methyl-4-amino-5-hydroxymethyl pyrimidine pyrophosphate (HMP-PP) to form thiamine monophosphate (TMP). The sequence is that of Thiamine-phosphate synthase from Salmonella agona (strain SL483).